The sequence spans 75 residues: Large ribosomal subunit protein bL31 (75 aa).

Belongs to the bacterial ribosomal protein bL31 family. Type A subfamily. As to quaternary structure, part of the 50S ribosomal subunit.

Binds the 23S rRNA. This chain is Large ribosomal subunit protein bL31, found in Zymomonas mobilis subsp. mobilis (strain ATCC 31821 / ZM4 / CP4).